A 132-amino-acid polypeptide reads, in one-letter code: Glycerol-3-phosphate cytidylyltransferase (132 aa).

CTP-binding positions include 9–10 and 14–17; these read TY and HYGH. Lys-44 is a substrate binding site. Lys-46 provides a ligand contact to CTP. Lys-77 serves as a coordination point for substrate. 113–120 contributes to the CTP binding site; the sequence is RTEGISTT.

The protein belongs to the cytidylyltransferase family. As to quaternary structure, homotetramer or homodimer.

The protein resides in the cytoplasm. The catalysed reaction is sn-glycerol 3-phosphate + CTP + H(+) = CDP-glycerol + diphosphate. The protein operates within cell wall biogenesis; poly(ribitol phosphate) teichoic acid biosynthesis. Its function is as follows. Catalyzes the transfer of the cytidylyl group of CTP to sn-glycerol 3-phosphate so the activated glycerol 3-phosphate can be used for teichoic acid synthesis, via incorporation into both the linkage unit by TarB and TarF. The polypeptide is Glycerol-3-phosphate cytidylyltransferase (Staphylococcus aureus (strain NCTC 8325 / PS 47)).